The sequence spans 555 residues: Cinnamate beta-D-glucosyltransferase (555 aa).

His-19 acts as the Proton acceptor in catalysis. His-19 contacts an anthocyanidin. Gln-344, His-359, Trp-362, Asn-363, Ser-364, and Glu-367 together coordinate UDP-alpha-D-glucose. Residue Gly-382 coordinates an anthocyanidin. Residues Asp-383 and Gln-384 each coordinate UDP-alpha-D-glucose.

It belongs to the UDP-glycosyltransferase family. As to expression, highest expression detected in fruit, with lower levels detected in flower and petiole. Barely detectable in leaf and root.

It carries out the reaction (E)-cinnamate + UDP-alpha-D-glucose = 1-O-(trans-cinnamoyl)-beta-D-glucose + UDP. Functionally, broad spectrum multifunctional glucosyltransferase. Catalyzes the formation of cinnamic acid and p-coumaric acid glucose esters during fruit ripening. Accepted substrates range from derivatives of cinnamic acid and benzoic acid to heterocyclic and aliphatic compounds, resulting in the formation of O- and S-glucose esters and O-glucosides. May also be involved in detoxification of xenobiotics. The protein is Cinnamate beta-D-glucosyltransferase of Fragaria ananassa (Strawberry).